We begin with the raw amino-acid sequence, 463 residues long: Quinolone resistance protein NorB (463 aa).

14 helical membrane-spanning segments follow: residues 17–37, 53–73, 86–106, 107–127, 142–162, 165–185, 201–221, 230–250, 273–293, 299–319, 334–354, 357–377, 403–423, and 435–455; these read IGIVLSVITFWLFAQSLVNVV, IAVSITALFSGMFVVGAGGLA, IILNILGSLLIIISNIPLLLI, IGRLIQGLSAACIMPATLSII, YWSIGSWGGSGVCSFFGGAVA, LGWRWIFILSIIISLIALFLI, FDIKGLVLLVIMLLTLNILIT, SLLFITLLAIAIGSFSLFIVL, TASNFLLNGVAGTLIVANTFV, YSSLQAGSLSITYLVMVLIMI, PMLIGTGVLIVGECLISLTFL, ILYVICCIIGYLFFGLGLGIY, MASALGGAFGVALSGAVYAIV, and IALWLNAGMGILSFVIILLLV.

Belongs to the major facilitator superfamily. TCR/Tet family.

Its subcellular location is the cell membrane. Multidrug efflux pump that acts independently of NorA and is one of the factors that confers resistance against diverse quinolones and chemical compounds. The chain is Quinolone resistance protein NorB (norB) from Staphylococcus aureus (strain Mu3 / ATCC 700698).